A 430-amino-acid polypeptide reads, in one-letter code: Dihydroorotase (430 aa).

2 residues coordinate Zn(2+): histidine 60 and histidine 62. Substrate-binding positions include 62–64 (HFR) and asparagine 94. Positions 151, 178, and 231 each coordinate Zn(2+). Position 277 (asparagine 277) interacts with substrate. Aspartate 304 is a Zn(2+) binding site. Aspartate 304 is a catalytic residue. Substrate is bound by residues histidine 308 and 322 to 323 (FG).

The protein belongs to the metallo-dependent hydrolases superfamily. DHOase family. Class I DHOase subfamily. It depends on Zn(2+) as a cofactor.

It catalyses the reaction (S)-dihydroorotate + H2O = N-carbamoyl-L-aspartate + H(+). It participates in pyrimidine metabolism; UMP biosynthesis via de novo pathway; (S)-dihydroorotate from bicarbonate: step 3/3. Functionally, catalyzes the reversible cyclization of carbamoyl aspartate to dihydroorotate. The polypeptide is Dihydroorotase (Carboxydothermus hydrogenoformans (strain ATCC BAA-161 / DSM 6008 / Z-2901)).